A 114-amino-acid polypeptide reads, in one-letter code: uncharacterized protein (114 aa).

The region spanning 2 to 97 is the HTH arsR-type domain; sequence ESEPLYKLKA…VARKVLARVL (96 aa). Positions 37-60 form a DNA-binding region, H-T-H motif; it reads GELLSSDVGLESSNLSQQLGVLRR.

This is an uncharacterized protein from Mycobacterium tuberculosis (strain CDC 1551 / Oshkosh).